A 399-amino-acid polypeptide reads, in one-letter code: Exodeoxyribonuclease 7 large subunit (399 aa).

It belongs to the XseA family. Heterooligomer composed of large and small subunits.

Its subcellular location is the cytoplasm. It catalyses the reaction Exonucleolytic cleavage in either 5'- to 3'- or 3'- to 5'-direction to yield nucleoside 5'-phosphates.. Its function is as follows. Bidirectionally degrades single-stranded DNA into large acid-insoluble oligonucleotides, which are then degraded further into small acid-soluble oligonucleotides. The protein is Exodeoxyribonuclease 7 large subunit of Clostridium botulinum (strain Eklund 17B / Type B).